The sequence spans 303 residues: Aspartate carbamoyltransferase catalytic subunit (303 aa).

Positions 54 and 55 each coordinate carbamoyl phosphate. Lys82 is an L-aspartate binding site. Arg104, His132, and Gln135 together coordinate carbamoyl phosphate. Arg165 and Arg221 together coordinate L-aspartate. Gly261 and Pro262 together coordinate carbamoyl phosphate.

This sequence belongs to the aspartate/ornithine carbamoyltransferase superfamily. ATCase family. Heterododecamer (2C3:3R2) of six catalytic PyrB chains organized as two trimers (C3), and six regulatory PyrI chains organized as three dimers (R2).

It carries out the reaction carbamoyl phosphate + L-aspartate = N-carbamoyl-L-aspartate + phosphate + H(+). The protein operates within pyrimidine metabolism; UMP biosynthesis via de novo pathway; (S)-dihydroorotate from bicarbonate: step 2/3. Catalyzes the condensation of carbamoyl phosphate and aspartate to form carbamoyl aspartate and inorganic phosphate, the committed step in the de novo pyrimidine nucleotide biosynthesis pathway. The polypeptide is Aspartate carbamoyltransferase catalytic subunit (Koribacter versatilis (strain Ellin345)).